A 431-amino-acid chain; its full sequence is Leucine carboxyl methyltransferase 1 (431 aa).

Residues Arg103, Gly131, Asp159, and 219–220 (DL) contribute to the S-adenosyl-L-methionine site. The disordered stretch occupies residues 228–268 (QPQQPLPPGVPIGSRGLHASPFTPGSTTQHEEQTEETSLPQ). Glu289 serves as a coordination point for S-adenosyl-L-methionine.

This sequence belongs to the methyltransferase superfamily. LCMT family.

It carries out the reaction [phosphatase 2A protein]-C-terminal L-leucine + S-adenosyl-L-methionine = [phosphatase 2A protein]-C-terminal L-leucine methyl ester + S-adenosyl-L-homocysteine. Functionally, methylates the carboxyl group of the C-terminal leucine residue of protein phosphatase 2A catalytic subunits to form alpha-leucine ester residues. This chain is Leucine carboxyl methyltransferase 1 (ppm-1), found in Neurospora crassa (strain ATCC 24698 / 74-OR23-1A / CBS 708.71 / DSM 1257 / FGSC 987).